We begin with the raw amino-acid sequence, 342 residues long: S-adenosylmethionine:tRNA ribosyltransferase-isomerase (342 aa).

The protein belongs to the QueA family. As to quaternary structure, monomer.

It localises to the cytoplasm. The catalysed reaction is 7-aminomethyl-7-carbaguanosine(34) in tRNA + S-adenosyl-L-methionine = epoxyqueuosine(34) in tRNA + adenine + L-methionine + 2 H(+). The protein operates within tRNA modification; tRNA-queuosine biosynthesis. Its function is as follows. Transfers and isomerizes the ribose moiety from AdoMet to the 7-aminomethyl group of 7-deazaguanine (preQ1-tRNA) to give epoxyqueuosine (oQ-tRNA). The chain is S-adenosylmethionine:tRNA ribosyltransferase-isomerase from Streptococcus pneumoniae serotype 19F (strain G54).